Consider the following 130-residue polypeptide: Holo-[acyl-carrier-protein] synthase (130 aa).

Mg(2+) is bound by residues Asp8 and Glu62.

This sequence belongs to the P-Pant transferase superfamily. AcpS family. Mg(2+) is required as a cofactor.

The protein resides in the cytoplasm. It catalyses the reaction apo-[ACP] + CoA = holo-[ACP] + adenosine 3',5'-bisphosphate + H(+). Transfers the 4'-phosphopantetheine moiety from coenzyme A to a Ser of acyl-carrier-protein. The polypeptide is Holo-[acyl-carrier-protein] synthase (Variovorax paradoxus (strain S110)).